We begin with the raw amino-acid sequence, 197 residues long: MHEEITGIILAGGRATRMGGEDKGLIQIAGIPLYQYVLSRLRPQVSLMAISANRNQARYGESGLPIVSDLTPDFSGPLAGMLAGLKHAATEWVVFVPCDVPDFPATLVDQLWQQKGSSLAAYASDGERAHPTLALLHTSLAPQLKEYLARGERKLMLFLDAAGARKIAFSGQQAAFHNLNTREDCLRWQQEKGLTNE.

Residues 10–12 (LAG), Lys23, Asp69, and Asp99 contribute to the GTP site. Asp99 is a binding site for Mg(2+).

It belongs to the MobA family. Monomer. Mg(2+) is required as a cofactor.

The protein localises to the cytoplasm. It catalyses the reaction Mo-molybdopterin + GTP + H(+) = Mo-molybdopterin guanine dinucleotide + diphosphate. Functionally, transfers a GMP moiety from GTP to Mo-molybdopterin (Mo-MPT) cofactor (Moco or molybdenum cofactor) to form Mo-molybdopterin guanine dinucleotide (Mo-MGD) cofactor. In Serratia proteamaculans (strain 568), this protein is Molybdenum cofactor guanylyltransferase.